The sequence spans 1297 residues: Phosphoribosylformylglycinamidine synthase (1297 aa).

Residues Gly307 to Asp318 and Ala678 contribute to the ATP site. Mg(2+) is bound by residues Glu718, Asn722, and Asp886. In terms of domain architecture, Glutamine amidotransferase type-1 spans Met1044–Ala1297. The active-site Nucleophile is the Cys1137. Residues His1262 and Glu1264 contribute to the active site.

This sequence in the N-terminal section; belongs to the FGAMS family. Monomer.

It localises to the cytoplasm. The enzyme catalyses N(2)-formyl-N(1)-(5-phospho-beta-D-ribosyl)glycinamide + L-glutamine + ATP + H2O = 2-formamido-N(1)-(5-O-phospho-beta-D-ribosyl)acetamidine + L-glutamate + ADP + phosphate + H(+). It participates in purine metabolism; IMP biosynthesis via de novo pathway; 5-amino-1-(5-phospho-D-ribosyl)imidazole from N(2)-formyl-N(1)-(5-phospho-D-ribosyl)glycinamide: step 1/2. Functionally, phosphoribosylformylglycinamidine synthase involved in the purines biosynthetic pathway. Catalyzes the ATP-dependent conversion of formylglycinamide ribonucleotide (FGAR) and glutamine to yield formylglycinamidine ribonucleotide (FGAM) and glutamate. The chain is Phosphoribosylformylglycinamidine synthase from Vibrio vulnificus (strain YJ016).